Consider the following 426-residue polypeptide: Elongation factor Tu, mitochondrial (426 aa).

The transit peptide at 1–27 (MFKNLAGSFRAVSRVAFKTRPSLVRSY) directs the protein to the mitochondrion. Residues 34–230 (KPHVNIGTIG…AVDEHIPTPT (197 aa)) form the tr-type G domain. The tract at residues 43–50 (GHVDHGKT) is G1. Residue 43-50 (GHVDHGKT) coordinates GTP. The tract at residues 84–88 (GITIS) is G2. The interval 105 to 108 (DCPG) is G3. GTP contacts are provided by residues 105-109 (DCPGH) and 160-163 (NKVD). A G4 region spans residues 160–163 (NKVD). Positions 198 to 200 (SAL) are G5.

This sequence belongs to the TRAFAC class translation factor GTPase superfamily. Classic translation factor GTPase family. EF-Tu/EF-1A subfamily.

The protein localises to the mitochondrion. The protein operates within protein biosynthesis; polypeptide chain elongation. In terms of biological role, G-protein that, in its active GTP-bound form, binds to and delivers aminoacyl-tRNA to the A-site of ribosomes during protein biosynthesis. In the presence of a correct codon-anticodon match between the aminoacyl-tRNA and the A-site codon of the ribosome-bound mRNA, the ribosome acts as a GTPase activator and the GTP is hydrolyzed. The inactive GDP-bound form leaves the ribosome and must be recycled before binding another molecule of aminoacyl-tRNA. Required for mitochondrial protein biosynthesis and maintenance of mitochondrial DNA. This Meyerozyma guilliermondii (strain ATCC 6260 / CBS 566 / DSM 6381 / JCM 1539 / NBRC 10279 / NRRL Y-324) (Yeast) protein is Elongation factor Tu, mitochondrial (TUF1).